Reading from the N-terminus, the 142-residue chain is Hemoglobin subunit alpha-A (142 aa).

In terms of domain architecture, Globin spans 2 to 142 (VLSAADKTNV…VGTVLTAKYR (141 aa)). His59 contacts O2. A heme b-binding site is contributed by His88.

This sequence belongs to the globin family. Heterotetramer of two alpha chains and two beta chains. As to expression, red blood cells.

Its function is as follows. Involved in oxygen transport from the lung to the various peripheral tissues. The sequence is that of Hemoglobin subunit alpha-A (HBAA) from Anser anser anser (Western greylag goose).